We begin with the raw amino-acid sequence, 157 residues long: Protein Smg (157 aa).

It belongs to the Smg family.

This chain is Protein Smg, found in Escherichia coli O8 (strain IAI1).